Here is a 319-residue protein sequence, read N- to C-terminus: GTP 3',8-cyclase (319 aa).

Residues Lys4–Leu227 enclose the Radical SAM core domain. Residue Arg13 participates in GTP binding. Residues Cys20 and Cys24 each contribute to the [4Fe-4S] cluster site. Tyr26 serves as a coordination point for S-adenosyl-L-methionine. Position 27 (Cys27) interacts with [4Fe-4S] cluster. Arg63 serves as a coordination point for GTP. Gly67 serves as a coordination point for S-adenosyl-L-methionine. Thr94 is a binding site for GTP. Ser118 is an S-adenosyl-L-methionine binding site. Residue Lys155 coordinates GTP. An S-adenosyl-L-methionine-binding site is contributed by Met189. Residues Cys249 and Cys252 each contribute to the [4Fe-4S] cluster site. Arg254–Arg256 serves as a coordination point for GTP. Cys266 is a [4Fe-4S] cluster binding site.

This sequence belongs to the radical SAM superfamily. MoaA family. Monomer and homodimer. [4Fe-4S] cluster is required as a cofactor.

It catalyses the reaction GTP + AH2 + S-adenosyl-L-methionine = (8S)-3',8-cyclo-7,8-dihydroguanosine 5'-triphosphate + 5'-deoxyadenosine + L-methionine + A + H(+). It functions in the pathway cofactor biosynthesis; molybdopterin biosynthesis. Functionally, catalyzes the cyclization of GTP to (8S)-3',8-cyclo-7,8-dihydroguanosine 5'-triphosphate. This chain is GTP 3',8-cyclase, found in Clostridium botulinum (strain Langeland / NCTC 10281 / Type F).